The primary structure comprises 103 residues: MAVQQKIRIKLKSYDHSLVDKWALRIIDVVKQTDAIIFGPIPLPTKSHVYTVNRSPHVDKKSREQFSFSSHKRLIEIINPTSRTIDMLMKLELPSGVDVEIKS.

The protein belongs to the universal ribosomal protein uS10 family. In terms of assembly, part of the 30S ribosomal subunit.

Functionally, involved in the binding of tRNA to the ribosomes. The polypeptide is Small ribosomal subunit protein uS10 (Pelodictyon phaeoclathratiforme (strain DSM 5477 / BU-1)).